Reading from the N-terminus, the 280-residue chain is MGQKINPHGFRLGITTEWKSRWYADKQYADYIKEDVAIRKLLATGLERAGIADVEIERTRDRVRVDIHTARPGIVIGRRGTEADRIRADLEKLTKKQVQLNILEVKNPESVAQLVAQGVAEQLSNRVAFRRAMRKAIQSAMRQPNVKGIRVQCSGRLGGAEMSRSEFYREGRVPLHTLRADIDYGLYEAKTTFGRIGVKVWIYKGDIVGGKRELTAAAPAADRPRRDRPSGTRPRRSGASGTTATSTDAGRAASEGTVEAPATEAAATAPSAGQPETTES.

One can recognise a KH type-2 domain in the interval 38–106; that stretch reads IRKLLATGLE…QVQLNILEVK (69 aa). The disordered stretch occupies residues 216–280; the sequence is AAAPAADRPR…SAGQPETTES (65 aa). A compositionally biased stretch (low complexity) spans 237–270; sequence SGASGTTATSTDAGRAASEGTVEAPATEAAATAP.

The protein belongs to the universal ribosomal protein uS3 family. In terms of assembly, part of the 30S ribosomal subunit. Forms a tight complex with proteins S10 and S14.

Its function is as follows. Binds the lower part of the 30S subunit head. Binds mRNA in the 70S ribosome, positioning it for translation. This Mycolicibacterium vanbaalenii (strain DSM 7251 / JCM 13017 / BCRC 16820 / KCTC 9966 / NRRL B-24157 / PYR-1) (Mycobacterium vanbaalenii) protein is Small ribosomal subunit protein uS3.